The chain runs to 65 residues: Large ribosomal subunit protein bL35 (65 aa).

It belongs to the bacterial ribosomal protein bL35 family.

This Desulforapulum autotrophicum (strain ATCC 43914 / DSM 3382 / VKM B-1955 / HRM2) (Desulfobacterium autotrophicum) protein is Large ribosomal subunit protein bL35.